We begin with the raw amino-acid sequence, 178 residues long: Prion-like protein doppel (178 aa).

The signal sequence occupies residues 1 to 25 (MRKHLGGCWLAIVCVLLFSQLSSVK). A flexible tail region spans residues 27 to 50 (RGIKHRIKWNRKVLPSTSQVTEAH). Positions 51-154 (TAEIRPGAFI…KHCDFWLERG (104 aa)) are globular. 2 cysteine pairs are disulfide-bonded: Cys-94/Cys-147 and Cys-108/Cys-142. N-linked (GlcNAc...) asparagine glycosylation is found at Asn-98 and Asn-110. The cu(2+) binding stretch occupies residues 124 to 141 (KQDNKLYQRVLWQLIREL). Gly-154 carries GPI-anchor amidated glycine lipidation. Positions 155–178 (AGLQVTLDQPMMLCLLVFIWFIVK) are cleaved as a propeptide — removed in mature form.

It belongs to the prion family. Post-translationally, N-glycosylated. O-glycosylated. Strongly expressed in testis. Detected at low levels in lymph node, spleen and ovary.

The protein resides in the cell membrane. Functionally, required for normal acrosome reaction and for normal male fertility. Can bind Cu(2+). The protein is Prion-like protein doppel (PRND) of Ovis aries (Sheep).